Here is a 342-residue protein sequence, read N- to C-terminus: MADECAAFMKGTELPVKRPREEEAETEMEAANNSNNGCEKEESSPYISSVLPGWFSEISPLWPGEAHSLKVEKILFQGKSDYQNVLVFQSSTYGKVLVLDGVIQLTERDECAYQEMITHLPLCSIPNPKKVLVIGGGDGGVLREVSRHSSVEQIDICEIDKMVVEVAKQFFPDVAVGYEDPRVNLHIGDGVAFLKNVPAGTYDAVIVDSSDPIGPAQELFEKPFFESIAKALRPGGVVSTQAESIWLHMHIIEEIVANCRQIFKGSVNYAWTTVPTYPSGMIGFMLCSTEGPAVDFKNPINPIDDESPAKSIEPLKFYNSEIHQASFCLPSFAKRVIETKGK.

Residues 9–42 are disordered; that stretch reads MKGTELPVKRPREEEAETEMEAANNSNNGCEKEE. Positions 52-289 constitute a PABS domain; sequence PGWFSEISPL…GMIGFMLCST (238 aa). Q83 contributes to the S-adenosyl 3-(methylsulfanyl)propylamine binding site. Y113 is a binding site for putrescine. S-adenosyl 3-(methylsulfanyl)propylamine-binding positions include Q114, D138, E158, 189 to 190, and D208; that span reads DG. Residue D208 is the Proton acceptor of the active site. Putrescine contacts are provided by residues 208–211 and Y277; that span reads DSSD.

Belongs to the spermidine/spermine synthase family.

The catalysed reaction is S-adenosyl 3-(methylsulfanyl)propylamine + putrescine = S-methyl-5'-thioadenosine + spermidine + H(+). It functions in the pathway amine and polyamine biosynthesis; spermidine biosynthesis; spermidine from putrescine: step 1/1. The sequence is that of Spermidine synthase (SPDSYN) from Solanum lycopersicum (Tomato).